We begin with the raw amino-acid sequence, 486 residues long: Cardiolipin synthase A (486 aa).

2 helical membrane passes run 3–23 (TFYT…IASV) and 38–58 (MAWL…YLSF). 2 consecutive PLD phosphodiesterase domains span residues 219–246 (MDLR…VDPR) and 399–426 (EGGL…DMRS). Active-site residues include histidine 224, lysine 226, aspartate 231, histidine 404, lysine 406, and aspartate 411.

Belongs to the phospholipase D family. Cardiolipin synthase subfamily. ClsA sub-subfamily.

The protein localises to the cell inner membrane. It carries out the reaction 2 a 1,2-diacyl-sn-glycero-3-phospho-(1'-sn-glycerol) = a cardiolipin + glycerol. In terms of biological role, catalyzes the reversible phosphatidyl group transfer from one phosphatidylglycerol molecule to another to form cardiolipin (CL) (diphosphatidylglycerol) and glycerol. This Edwardsiella ictaluri (strain 93-146) protein is Cardiolipin synthase A.